The primary structure comprises 397 residues: Dual specificity mitogen-activated protein kinase kinase 4 (397 aa).

A disordered region spans residues 1–38 (MAAPSPSGGGGSGGGGGTPGPIGPPASGHPAVSSMQGK). Alanine 2 carries the N-acetylalanine modification. Over residues 7–20 (SGGGGSGGGGGTPG) the composition is skewed to gly residues. The d domain stretch occupies residues 35 to 50 (MQGKRKALKLNFANPP). At arginine 56 the chain carries Asymmetric dimethylarginine; alternate. Residue arginine 56 is modified to Omega-N-methylarginine; alternate. Serine 88 bears the Phosphoserine mark. In terms of domain architecture, Protein kinase spans 100–366 (LKDLGEIGRG…KELLKHPFIL (267 aa)). Residues 106-114 (IGRGAYGSV) and lysine 129 each bind ATP. Aspartate 227 functions as the Proton acceptor in the catalytic mechanism. Residue serine 255 is modified to Phosphoserine. Threonine 259 carries the post-translational modification Phosphothreonine. The interval 362 to 385 (HPFILMYEERTVEVACYVCKILDQ) is DVD domain.

Belongs to the protein kinase superfamily. STE Ser/Thr protein kinase family. MAP kinase kinase subfamily. As to quaternary structure, interacts with SPAG9. Interacts (via its D domain) with its substrates MAPK8/JNK1, MAPK9/JNK2, MAPK10/JNK3, MAPK11 and MAPK14. Interacts (via its DVD domain) with MAP3Ks activators like MAP3K1/MEKK1 and MAP3K11/MLK3. Interacts with ARRB1, ARRB2 and MAPK8IP3/JIP3. Activated by phosphorylation on Ser-255 and Thr-259 by MAP kinase kinase kinases (MAP3Ks). As to expression, strong expression is detected in most of the central nervous system and in liver and thymus during early stages of development. While expression in nervous system increases over time, expression in fetal liver and thymus gradually decreases as embryogenesis proceeds. High level of expression in the central nervous system persists throughout postnatal development and remained at a stable level in adult brain.

Its subcellular location is the cytoplasm. The protein resides in the nucleus. The enzyme catalyses L-seryl-[protein] + ATP = O-phospho-L-seryl-[protein] + ADP + H(+). The catalysed reaction is L-threonyl-[protein] + ATP = O-phospho-L-threonyl-[protein] + ADP + H(+). It catalyses the reaction L-tyrosyl-[protein] + ATP = O-phospho-L-tyrosyl-[protein] + ADP + H(+). Its activity is regulated as follows. Activated in response to a variety of cellular stresses, including UV and gamma-irradiation, heat shock, hyperosmolarity, T-cell receptor stimulation, peroxide and inflammatory cytokines. Also activated by developmental cues. MAP2K4/MKK4 is activated by the majority of MKKKs, such as MAP3K5/ASK1, MAP3K1/MEKK1, MAP3K7/TAK1, MAP3K10/MLK2, MAP3K11/MLK3, MAP3K12/DLK and MAP3K13/LZK. In terms of biological role, dual specificity protein kinase which acts as an essential component of the MAP kinase signal transduction pathway. Essential component of the stress-activated protein kinase/c-Jun N-terminal kinase (SAP/JNK) signaling pathway. With MAP2K7/MKK7, is the one of the only known kinase to directly activate the stress-activated protein kinase/c-Jun N-terminal kinases MAPK8/JNK1, MAPK9/JNK2 and MAPK10/JNK3. MAP2K4/MKK4 and MAP2K7/MKK7 both activate the JNKs by phosphorylation, but they differ in their preference for the phosphorylation site in the Thr-Pro-Tyr motif. MAP2K4 shows preference for phosphorylation of the Tyr residue and MAP2K7/MKK7 for the Thr residue. The phosphorylation of the Thr residue by MAP2K7/MKK7 seems to be the prerequisite for JNK activation at least in response to pro-inflammatory cytokines, while other stimuli activate both MAP2K4/MKK4 and MAP2K7/MKK7 which synergistically phosphorylate JNKs. MAP2K4 is required for maintaining peripheral lymphoid homeostasis. The MKK/JNK signaling pathway is also involved in mitochondrial death signaling pathway, including the release cytochrome c, leading to apoptosis. Whereas MAP2K7/MKK7 exclusively activates JNKs, MAP2K4/MKK4 additionally activates the p38 MAPKs MAPK11, MAPK12, MAPK13 and MAPK14. The chain is Dual specificity mitogen-activated protein kinase kinase 4 (Map2k4) from Mus musculus (Mouse).